Here is a 147-residue protein sequence, read N- to C-terminus: Large ribosomal subunit protein uL13 (147 aa).

The protein belongs to the universal ribosomal protein uL13 family. Part of the 50S ribosomal subunit.

This protein is one of the early assembly proteins of the 50S ribosomal subunit, although it is not seen to bind rRNA by itself. It is important during the early stages of 50S assembly. The polypeptide is Large ribosomal subunit protein uL13 (Kineococcus radiotolerans (strain ATCC BAA-149 / DSM 14245 / SRS30216)).